Consider the following 363-residue polypeptide: Large ribosomal subunit protein uL4 (363 aa).

The protein belongs to the universal ribosomal protein uL4 family. As to quaternary structure, component of the large ribosomal subunit. Mature ribosomes consist of a small (40S) and a large (60S) subunit. The 40S subunit contains about 32 different proteins and 1 molecule of RNA (18S). The 60S subunit contains 45 different proteins and 3 molecules of RNA (25S, 5.8S and 5S).

Its subcellular location is the cytoplasm. Component of the ribosome, a large ribonucleoprotein complex responsible for the synthesis of proteins in the cell. The small ribosomal subunit (SSU) binds messenger RNAs (mRNAs) and translates the encoded message by selecting cognate aminoacyl-transfer RNA (tRNA) molecules. The large subunit (LSU) contains the ribosomal catalytic site termed the peptidyl transferase center (PTC), which catalyzes the formation of peptide bonds, thereby polymerizing the amino acids delivered by tRNAs into a polypeptide chain. The nascent polypeptides leave the ribosome through a tunnel in the LSU and interact with protein factors that function in enzymatic processing, targeting, and the membrane insertion of nascent chains at the exit of the ribosomal tunnel. The polypeptide is Large ribosomal subunit protein uL4 (Candida albicans (strain SC5314 / ATCC MYA-2876) (Yeast)).